Consider the following 217-residue polypeptide: Protein GrpE (217 aa).

Positions 1–63 (MAETSNSENK…AADSELSLQS (63 aa)) are disordered. Positions 10-32 (KTSEEAKASEKNSRSITLEETKL) are enriched in basic and acidic residues. The span at 37–63 (SEESTQTTESTQAQAAEAADSELSLQS) shows a compositional bias: low complexity.

It belongs to the GrpE family. As to quaternary structure, homodimer.

Its subcellular location is the cytoplasm. Functionally, participates actively in the response to hyperosmotic and heat shock by preventing the aggregation of stress-denatured proteins, in association with DnaK and GrpE. It is the nucleotide exchange factor for DnaK and may function as a thermosensor. Unfolded proteins bind initially to DnaJ; upon interaction with the DnaJ-bound protein, DnaK hydrolyzes its bound ATP, resulting in the formation of a stable complex. GrpE releases ADP from DnaK; ATP binding to DnaK triggers the release of the substrate protein, thus completing the reaction cycle. Several rounds of ATP-dependent interactions between DnaJ, DnaK and GrpE are required for fully efficient folding. This is Protein GrpE from Leptospira borgpetersenii serovar Hardjo-bovis (strain JB197).